The primary structure comprises 441 residues: Importin subunit alpha-8 (441 aa).

ARM repeat units lie at residues 39 to 79 (QRDI…NIAV), 80 to 118 (DNPG…NVAG), 121 to 158 (IHYR…NLCR), 160 to 199 (KPHP…HLSE), 202 to 241 (EDGI…AMTA), 244 to 284 (HQQT…NITA), 287 to 326 (KEQI…NMAL), and 330 to 370 (HDQI…NMLK).

Belongs to the importin alpha family. In terms of assembly, forms a complex with importin subunit beta-1.

It localises to the nucleus envelope. Functionally, binds to conventional NLS motifs and mediates nuclear protein import across the nuclear envelope. In Arabidopsis thaliana (Mouse-ear cress), this protein is Importin subunit alpha-8.